Consider the following 203-residue polypeptide: High frequency lysogenization protein HflD homolog (203 aa).

Belongs to the HflD family.

Its subcellular location is the cytoplasm. It localises to the cell inner membrane. The chain is High frequency lysogenization protein HflD homolog from Vesicomyosocius okutanii subsp. Calyptogena okutanii (strain HA).